We begin with the raw amino-acid sequence, 225 residues long: Chromosome partition protein MukE (225 aa).

The interval 197-225 is disordered; that stretch reads RDGEAMPIENHLQLNDETEESQPDSGEEE. A compositionally biased stretch (acidic residues) spans 212-225; that stretch reads DETEESQPDSGEEE.

This sequence belongs to the MukE family. Interacts, and probably forms a ternary complex, with MukF and MukB. The complex formation is stimulated by calcium or magnesium.

Its subcellular location is the cytoplasm. The protein resides in the nucleoid. Functionally, involved in chromosome condensation, segregation and cell cycle progression. May participate in facilitating chromosome segregation by condensation DNA from both sides of a centrally located replisome during cell division. Probably acts via its interaction with MukB and MukF. The protein is Chromosome partition protein MukE of Salmonella typhi.